The primary structure comprises 919 residues: Aminodeoxychorismate synthase, chloroplastic (919 aa).

The N-terminal 45 residues, 1 to 45 (MNMNFSFCSTSSELSYPSENVLRFSVASRLFSPKWKKSFISLPCR), are a transit peptide targeting the chloroplast. Residues 86 to 342 (RTLLIDNYDS…KDITVNYWSR (257 aa)) enclose the Glutamine amidotransferase type-1 domain. C172 acts as the Nucleophile in catalysis. Catalysis depends on residues H316 and E318. Residues 436 to 910 (IFMELFGKNR…KTRAPANAVM (475 aa)) are PABB component.

It in the C-terminal section; belongs to the anthranilate synthase component I family.

Its subcellular location is the plastid. The protein localises to the chloroplast. The catalysed reaction is chorismate + L-glutamine = 4-amino-4-deoxychorismate + L-glutamate. The protein operates within cofactor biosynthesis; tetrahydrofolate biosynthesis; 4-aminobenzoate from chorismate: step 1/2. With respect to regulation, activated by chorismate and inhibited by dihydrofolate and methotrexate. Bifunctional enzyme that catalyzes the biosynthesis of 4-amino-4-deoxychorismate (ADC) from chorismate and glutamine. In the first step, a glutamine amidotransferase generates ammonia that is channelled between the binding sites of glutamine and chorismate and used along with chorismate in the second step, catalyzed by aminodeoxychorismate synthase, to produce ADC. Required for the synthesis of 4-aminobenzoate (PABA), an important component in tetrahydrofolate biosynthesis. Does not possess ADC lyase activity. The chain is Aminodeoxychorismate synthase, chloroplastic (ADCS) from Arabidopsis thaliana (Mouse-ear cress).